The chain runs to 126 residues: Small ribosomal subunit protein bS6 (126 aa).

The tract at residues 104–126 is disordered; the sequence is LARRDRGDRPERPREDFGAQAQA. A compositionally biased stretch (basic and acidic residues) spans 105 to 120; it reads ARRDRGDRPERPREDF.

Belongs to the bacterial ribosomal protein bS6 family.

In terms of biological role, binds together with bS18 to 16S ribosomal RNA. This Caulobacter vibrioides (strain ATCC 19089 / CIP 103742 / CB 15) (Caulobacter crescentus) protein is Small ribosomal subunit protein bS6.